Consider the following 1003-residue polypeptide: Rho-associated protein kinase 1 (1003 aa).

The tract at residues 1–28 (VAPVVPDLSSDIDTSNFDDLEEDKGEEE) is disordered. Residues 1 to 58 (VAPVVPDLSSDIDTSNFDDLEEDKGEEETFPIPKAFVGNQLPFVGFTYYSNRRYLSSA) form the AGC-kinase C-terminal domain. Residues 16 to 28 (NFDDLEEDKGEEE) are compositionally biased toward acidic residues. The interval 17–376 (FDDLEEDKGE…KKLKEEREAR (360 aa)) is interaction with FHOD1. Positions 71–341 (KSLQESLQKT…RLEQEVNEHK (271 aa)) form a coiled coil. The REM-1 domain occupies 128–205 (STVSQIEKEK…LEEANDLLRT (78 aa)). Position 296 is an N6-acetyllysine (Lys-296). The SHROOM3 binding stretch occupies residues 356 to 595 (EAKSVAMCEM…TVSRLEEANS (240 aa)). The RhoBD domain occupies 598 to 664 (TKDIEILRRE…LAEIMNRKDF (67 aa)). The tract at residues 647 to 659 (LKTQAVNKLAEIM) is RHOA binding. Residues 660–751 (NRKDFKIDRK…KLLDLSDSTS (92 aa)) adopt a coiled-coil conformation. Residues Ser-754 and Ser-757 each carry the phosphoserine modification. Positions 764 to 1003 (NLPESRIEGW…VVKNTSGKTR (240 aa)) are auto-inhibitory. The PH domain maps to 767–966 (ESRIEGWLSV…WVTHLVKKIP (200 aa)). The Phorbol-ester/DAG-type zinc finger occupies 877–930 (GHEFIPTLYHFPANCDACAKPLWHVFKPPPALECRRCHVKCHRDHLDKKEDLIC). The tract at residues 968-1003 (NPPSGFVRASPRTLSTRSTANQSFRKVVKNTSGKTR) is disordered. Ser-977 is modified (phosphoserine). The span at 979 to 1003 (RTLSTRSTANQSFRKVVKNTSGKTR) shows a compositional bias: polar residues.

Belongs to the protein kinase superfamily. AGC Ser/Thr protein kinase family. Homodimer. Interacts with RHOA (activated by GTP), RHOB, RHOC, GEM, MYLC2B, RHOE, PPP1R12A, LIMK1, LIMK2, TSG101, CHORDC1, DAPK3, PFN1, PTEN and JIP3. Interacts with ITGB1BP1 (via N-terminus and PTB domain). Interacts with FHOD1 in a Src-dependent manner. Interacts with SHROOM3. Mg(2+) is required as a cofactor. Autophosphorylated on serine and threonine residues. Post-translationally, cleaved by caspase-3 during apoptosis. This leads to constitutive activation of the kinase and membrane blebbing.

It is found in the cytoplasm. Its subcellular location is the cytoskeleton. The protein localises to the microtubule organizing center. It localises to the centrosome. The protein resides in the centriole. It is found in the golgi apparatus membrane. Its subcellular location is the cell projection. The protein localises to the bleb. It localises to the cell membrane. The protein resides in the lamellipodium. It is found in the ruffle. The catalysed reaction is L-seryl-[protein] + ATP = O-phospho-L-seryl-[protein] + ADP + H(+). It carries out the reaction L-threonyl-[protein] + ATP = O-phospho-L-threonyl-[protein] + ADP + H(+). With respect to regulation, activated by RHOA binding. Inhibited by Y-27632. Protein kinase which is a key regulator of actin cytoskeleton and cell polarity. Involved in regulation of smooth muscle contraction, actin cytoskeleton organization, stress fiber and focal adhesion formation, neurite retraction, cell adhesion and motility via phosphorylation of DAPK3, GFAP, LIMK1, LIMK2, MYL9/MLC2, TPPP, PFN1 and PPP1R12A. Phosphorylates FHOD1 and acts synergistically with it to promote SRC-dependent non-apoptotic plasma membrane blebbing. Phosphorylates JIP3 and regulates the recruitment of JNK to JIP3 upon UVB-induced stress. Acts as a suppressor of inflammatory cell migration by regulating PTEN phosphorylation and stability. Acts as a negative regulator of VEGF-induced angiogenic endothelial cell activation. Required for centrosome positioning and centrosome-dependent exit from mitosis. Plays a role in terminal erythroid differentiation. May regulate closure of the eyelids and ventral body wall by inducing the assembly of actomyosin bundles. Promotes keratinocyte terminal differentiation. Involved in osteoblast compaction through the fibronectin fibrillogenesis cell-mediated matrix assembly process, essential for osteoblast mineralization. The sequence is that of Rho-associated protein kinase 1 (ROCK1) from Pan troglodytes (Chimpanzee).